The sequence spans 262 residues: Cell division protein FtsQ (262 aa).

Topologically, residues methionine 1 to tyrosine 20 are cytoplasmic. The chain crosses the membrane as a helical span at residues leucine 21–leucine 41. The Periplasmic segment spans residues leucine 42–arginine 262. Residues leucine 52 to glutamine 121 enclose the POTRA domain.

Belongs to the FtsQ/DivIB family. FtsQ subfamily. Part of a complex composed of FtsB, FtsL and FtsQ.

The protein resides in the cell inner membrane. Functionally, essential cell division protein. May link together the upstream cell division proteins, which are predominantly cytoplasmic, with the downstream cell division proteins, which are predominantly periplasmic. May control correct divisome assembly. The protein is Cell division protein FtsQ of Shewanella oneidensis (strain ATCC 700550 / JCM 31522 / CIP 106686 / LMG 19005 / NCIMB 14063 / MR-1).